The following is a 1600-amino-acid chain: MAAAAVVVPAEWIKNWEKSGRGEFLHLCRILSENKSHDSSTYRDFQQALYELSYHVIKGNLKHEQASNVLNDISEFREDMPSILADVFCILDIETNCLEEKSKRDYFTQLVLACLYLVSDTVLKERLDPETLESLGLIKQSQQFNQKSVKIKTKLFYKQQKFNLLREENEGYAKLIAELGQDLSGSITSDLILENIKSLIGCFNLDPNRVLDVILEVFECRPEHDDFFISLLESYMSMCEPQTLCHILGFKFKFYQEPNGETPSSLYRVAAVLLQFNLIDLDDLYVHLLPADNCIMDEHKREIAEAKQIVRKLTMVVLSSEKMDDREKEKEKEEEKVEKPPDNQKLGLLEALLKIGDWQHAQNIMDQMPPYYAASHKLIALAICKLIHITIEPLYRRVGVPKGAKGSPVNALQNKRAPKQAESFEDLRRDVFNMFCYLGPHLSHDPILFAKVVRIGKSFMKEFQSDGSKQEDKEKTEVILSCLLSITDQVLLPSLSLMDCNACMSEELWGMFKTFPYQHRYRLYGQWKNETYNSHPLLVKVKAQTIDRAKYIMKRLTKENVKPSGRQIGKLSHSNPTILFDYILSQIQKYDNLIIPVVDSLKYLTSLNYDVLAYCIIEALANPEKERMKHDDTTISSWLQSLASFCGAVFRKYPIDLAGLLQYVANQLKAGKSFDLLILKEVVQKMAGIEITEEMTMEQLEAMTGGEQLKAEGGYFGQIRNTKKSSQRLKDALLDHDLALPLCLLMAQQRNGVIFQEGGEKHLKLVGKLYDQCHDTLVQFGGFLASNLSTEDYIKRVPSIDVLCNEFHTPHDAAFFLSRPMYAHHISSKYDELKKSEKGSKQQHKVHKYITSCEMVMAPVHEAVVSLHVSKVWDDISPQFYATFWSLTMYDLAVPHTSYEREVNKLKVQMKAIDDNQEMPPNKKKKEKERCTALQDKLLEEEKKQMEHVQRVLQRLKLEKDNWLLAKSTKNETITKFLQLCIFPRCIFSAIDAVYCARFVELVHQQKTPNFSTLLCYDRVFSDIIYTVASCTENEASRYGRFLCCMLETVTRWHSDRATYEKECGNYPGFLTILRATGFDGGNKADQLDYENFRHVVHKWHYKLTKASVHCLETGEYTHIRNILIVLTKILPWYPKVLNLGQALERRVHKICQEEKEKRPDLYALAMGYSGQLKSRKSYMIPENEFHHKDPSPRNAVASVQNGPGCGPSPSSTGSTSKSDESSAEETDKSRERSQCGVKAVNKASSTTPKGNSSNGNSGSNSNKAVKENDKEKGKEKEKEKKEKTPATTPEARILGKDGKEKPKEERPNKDEKARETKERTPKSDKEKEKFKKEEKVKDEKFKTTVPNAESKSSQEREREKEPSRERDIAKEMKSKENVKGGEKTPVSGSLKSPVPRSDIPEPEREQKRRKIDTHPSPSHSSTVKDSLIELKESSAKLYINHTPPPLSKSKEREMDKKDLDKSRERSREREKKDEKDRKERKRDHSNSDREVPPDLTKRRKEENGTMGVSKHKSESPCESPYPNEKDKEKNKSKSSGKEKGSDSFKSEKMDKISSGGKKESRHDKEKIEKKEKRDSSGGKEEKKQYPFHLDVFSQYNGKL.

Residues 1–163 (MAAAAVVVPA…KLFYKQQKFN (163 aa)) are anchor domain; interaction with THOC5 and THOC7. The bow domain; interaction with THOC1 dock domain and THOC3 stretch occupies residues 164-534 (LLREENEGYA…GQWKNETYNS (371 aa)). Residues 293–339 (NCIMDEHKREIAEAKQIVRKLTMVVLSSEKMDDREKEKEKEEEKVEK) are a coiled coil. Residues 321–341 (EKMDDREKEKEKEEEKVEKPP) form a disordered region. The interval 535–686 (HPLLVKVKAQ…LILKEVVQKM (152 aa)) is MIF4G domain; interaction with THOC3 and DDX39B. The stern domain stretch occupies residues 687 to 1174 (AGIEITEEMT…LAMGYSGQLK (488 aa)). A coiled-coil region spans residues 896–965 (HTSYEREVNK…LKLEKDNWLL (70 aa)). The Nuclear localization signal motif lies at 923 to 928 (KKKKEK). Residues 1175–1597 (SRKSYMIPEN…FHLDVFSQYN (423 aa)) form a charged domain region. The tract at residues 1184–1600 (NEFHHKDPSP…DVFSQYNGKL (417 aa)) is disordered. Positions 1208–1217 (PSPSSTGSTS) are enriched in low complexity. Positions 1218–1234 (KSDESSAEETDKSRERS) are enriched in basic and acidic residues. The residue at position 1222 (serine 1222) is a Phosphoserine. The segment covering 1251 to 1263 (GNSSNGNSGSNSN) has biased composition (low complexity). Composition is skewed to basic and acidic residues over residues 1265-1285 (AVKE…KEKT), 1294-1343 (ILGK…EKFK), and 1353-1383 (SSQE…KGGE). Threonine 1385 carries the phosphothreonine modification. A phosphoserine mark is found at serine 1390, serine 1393, and serine 1417. Residues 1416 to 1425 (PSPSHSSTVK) are compositionally biased toward polar residues. Threonine 1443 is subject to Phosphothreonine. Over residues 1449–1504 (KSKEREMDKKDLDKSRERSREREKKDEKDRKERKRDHSNSDREVPPDLTKRRKEEN) the composition is skewed to basic and acidic residues. Serine 1450, serine 1486, and serine 1516 each carry phosphoserine. Positions 1464 to 1491 (RERSREREKKDEKDRKERKRDHSNSDRE) form a coiled coil. Basic and acidic residues predominate over residues 1524-1585 (NEKDKEKNKS…SSGGKEEKKQ (62 aa)).

It belongs to the THOC2 family. Component of the THO subcomplex, which is composed of THOC1, THOC2, THOC3, THOC5, THOC6 and THOC7. The THO subcomplex interacts with DDX39B to form the THO-DDX39B complex which multimerizes into a 28-subunit tetrameric assembly. Component of the transcription/export (TREX) complex at least composed of ALYREF/THOC4, DDX39B, SARNP/CIP29, CHTOP and the THO subcomplex; in the complex interacts with THOC1, THOC3, THOC5, THOC7 and DDX39B. TREX seems to have a dynamic structure involving ATP-dependent remodeling. Interacts with POLDIP3 and ZC3H11A.

The protein localises to the nucleus. The protein resides in the nucleus speckle. Its subcellular location is the cytoplasm. Functionally, component of the THO subcomplex of the TREX complex which is thought to couple mRNA transcription, processing and nuclear export, and which specifically associates with spliced mRNA and not with unspliced pre-mRNA. Required for efficient export of polyadenylated RNA and spliced mRNA. The THOC1-THOC2-THOC3 core complex alone is sufficient to bind export factor NXF1-NXT1 and promote ATPase activity of DDX39B; in the complex THOC2 is the only component that directly interacts with DDX39B. TREX is recruited to spliced mRNAs by a transcription-independent mechanism, binds to mRNA upstream of the exon-junction complex (EJC) and is recruited in a splicing- and cap-dependent manner to a region near the 5' end of the mRNA where it functions in mRNA export to the cytoplasm via the TAP/NXF1 pathway. Required for NXF1 localization to the nuclear rim. THOC2 (and probably the THO complex) is involved in releasing mRNA from nuclear speckle domains. Plays a role for proper neuronal development. This chain is THO complex subunit 2 (THOC2), found in Plecturocebus moloch (Dusky titi monkey).